We begin with the raw amino-acid sequence, 529 residues long: NADPH-dependent thioredoxin reductase 3 (529 aa).

The transit peptide at 1–67 (MAASPKIGIG…SSDSLRLRVS (67 aa)) directs the protein to the chloroplast. The tract at residues 54 to 78 (TRTRSSDSLRLRVSATANSPSSSSS) is disordered. A compositionally biased stretch (low complexity) spans 64–78 (LRVSATANSPSSSSS). FAD is bound by residues 91–94 (SGPA), 113–120 (EGYQMGGV), asparagine 133, valine 166, and cysteine 220. A disulfide bridge connects residues cysteine 217 and cysteine 220. 4 residues coordinate NADP(+): threonine 240, arginine 265, isoleucine 324, and tyrosine 344. Residues aspartate 364 and 371 to 374 (RQAV) contribute to the FAD site. An NADP(+)-binding site is contributed by arginine 371. The Thioredoxin domain maps to 403 to 529 (PQTEEAKKEF…EYREFIEANK (127 aa)). Catalysis depends on nucleophile residues cysteine 454 and cysteine 457. An intrachain disulfide couples cysteine 454 to cysteine 457.

It belongs to the class-II pyridine nucleotide-disulfide oxidoreductase family. As to quaternary structure, may homodimerize. Interacts with the 2-Cys peroxiredoxin BAS1. It depends on FAD as a cofactor.

The protein localises to the plastid. The protein resides in the chloroplast. It carries out the reaction [thioredoxin]-dithiol + NADP(+) = [thioredoxin]-disulfide + NADPH + H(+). Thioredoxin reductase (TR) that exhibits both TR and thioredoxin (Trx) activities. Contains a C-terminal functional Trx domain. Functions as an electron donor for plastidial 2-Cys peroxiredoxins and participates in a NADPH-dependent hydrogen peroxide scavenging system in chloroplasts in the dark. Required for chlorophyll biosynthesis and biogenesis of the photosynthetic apparatus. Activates aerobic cyclase which converts Mg-protoporhyrin monomethyl ester into protochlorophyllide. Involved in a light-dependent regulation of starch biosynthesis by redox activation of the ADP-glucose pyrophosphorylase (AGPase), a central enzyme of starch synthesis. The chain is NADPH-dependent thioredoxin reductase 3 from Arabidopsis thaliana (Mouse-ear cress).